A 150-amino-acid polypeptide reads, in one-letter code: Arginine repressor (150 aa).

This sequence belongs to the ArgR family.

Its subcellular location is the cytoplasm. The protein operates within amino-acid biosynthesis; L-arginine biosynthesis [regulation]. Its function is as follows. Regulates arginine biosynthesis genes. This chain is Arginine repressor, found in Clostridium botulinum (strain Eklund 17B / Type B).